Here is a 133-residue protein sequence, read N- to C-terminus: MSRVITDPIADMLVRIKNATARKHKNVLIPFSNKKSKILEIIKDQGYIFDFAIEGDSVKKNLNVTLKYKNNISVITGVKRISKPGLKVYSSVEDLPMVLNGYGIAIISTSKGVLTDKQARKENVGGEIVAYIW.

This sequence belongs to the universal ribosomal protein uS8 family. Part of the 30S ribosomal subunit. Contacts proteins S5 and S12.

In terms of biological role, one of the primary rRNA binding proteins, it binds directly to 16S rRNA central domain where it helps coordinate assembly of the platform of the 30S subunit. The sequence is that of Small ribosomal subunit protein uS8 from Mycoplasma mobile (strain ATCC 43663 / 163K / NCTC 11711) (Mesomycoplasma mobile).